The chain runs to 701 residues: Polyribonucleotide nucleotidyltransferase (701 aa).

2 residues coordinate Mg(2+): aspartate 487 and aspartate 493. Residues 554-613 (PTMIAMKIDTDKIRDVIGKGGATIRAICEETKASIDIEDDGSIKIFGETKEAAEAAKQRI) form the KH domain. The S1 motif domain maps to 623 to 691 (GKIYVGKVER…NRGRIKLSIK (69 aa)).

This sequence belongs to the polyribonucleotide nucleotidyltransferase family. In terms of assembly, component of the RNA degradosome, which is a multiprotein complex involved in RNA processing and mRNA degradation. The cofactor is Mg(2+).

It is found in the cytoplasm. It carries out the reaction RNA(n+1) + phosphate = RNA(n) + a ribonucleoside 5'-diphosphate. Its function is as follows. Involved in mRNA degradation. Catalyzes the phosphorolysis of single-stranded polyribonucleotides processively in the 3'- to 5'-direction. The sequence is that of Polyribonucleotide nucleotidyltransferase from Pseudomonas putida (strain GB-1).